The sequence spans 76 residues: Exodeoxyribonuclease 7 small subunit (76 aa).

The protein belongs to the XseB family. In terms of assembly, heterooligomer composed of large and small subunits.

The protein localises to the cytoplasm. The enzyme catalyses Exonucleolytic cleavage in either 5'- to 3'- or 3'- to 5'-direction to yield nucleoside 5'-phosphates.. Functionally, bidirectionally degrades single-stranded DNA into large acid-insoluble oligonucleotides, which are then degraded further into small acid-soluble oligonucleotides. The protein is Exodeoxyribonuclease 7 small subunit of Bacillus cereus (strain ATCC 14579 / DSM 31 / CCUG 7414 / JCM 2152 / NBRC 15305 / NCIMB 9373 / NCTC 2599 / NRRL B-3711).